Here is a 426-residue protein sequence, read N- to C-terminus: Enolase 2 (426 aa).

Glutamine 163 is a binding site for (2R)-2-phosphoglycerate. Glutamate 205 serves as the catalytic Proton donor. Positions 242, 285, and 312 each coordinate Mg(2+). 4 residues coordinate (2R)-2-phosphoglycerate: lysine 337, arginine 366, serine 367, and lysine 388. Lysine 337 serves as the catalytic Proton acceptor.

The protein belongs to the enolase family. Mg(2+) is required as a cofactor.

Its subcellular location is the cytoplasm. The protein resides in the secreted. It is found in the cell surface. The catalysed reaction is (2R)-2-phosphoglycerate = phosphoenolpyruvate + H2O. Its pathway is carbohydrate degradation; glycolysis; pyruvate from D-glyceraldehyde 3-phosphate: step 4/5. Functionally, catalyzes the reversible conversion of 2-phosphoglycerate (2-PG) into phosphoenolpyruvate (PEP). It is essential for the degradation of carbohydrates via glycolysis. The sequence is that of Enolase 2 from Methanospirillum hungatei JF-1 (strain ATCC 27890 / DSM 864 / NBRC 100397 / JF-1).